A 563-amino-acid polypeptide reads, in one-letter code: L-lactate permease (563 aa).

The next 14 helical transmembrane spans lie at 14-34 (LLLSALAALVPIIFFFWALAI), 37-57 (MKGYTAGLATLGIALIIAVLV), 73-93 (AVYGLLPIGWIIVTSVFLYKI), 131-151 (GAAGFGAPVAISAALLVGLGF), 157-177 (AGICLIANTAPVAFGAIGIPI), 194-214 (MVGRQLPFLSVFIPLYLIIIM), 220-240 (ALEIWPAILVSGVSFAVVQYL), 249-269 (LPDVLSALVSMAALAVFLKWW), 304-324 (IFKAWSPFLLLTAMISVWGIP), 381-401 (LGSAGTAILIAAVLSKFITAI), 419-439 (LPILTIASVVGFAYVTNSSGM), 448-468 (ALTGSMFTFFSPVLGWLGVFI), 506-526 (VTGKMISPQSIAVACAAVGLA), and 542-562 (FLLLLVCIITFLQHHVFSWMI).

It belongs to the lactate permease family.

The protein resides in the cell membrane. In terms of biological role, is the principal permease for the uptake of L-lactate in B.subtilis. The polypeptide is L-lactate permease (lutP) (Bacillus subtilis (strain 168)).